Here is a 119-residue protein sequence, read N- to C-terminus: MDIVDLVRIEKAYDRYGRKFLERIMTGEEIELCLKKPSPLASIAGRFAAKEAVVKALGTGITAAVHWKSFEVLNDPAGKPFVRSSQPGLLPEGCSIKISIAHDRHSAVATALLCRGPES.

Residues aspartate 2 and glutamate 51 each coordinate Mg(2+).

Belongs to the P-Pant transferase superfamily. AcpS family. Requires Mg(2+) as cofactor.

The protein resides in the cytoplasm. It catalyses the reaction apo-[ACP] + CoA = holo-[ACP] + adenosine 3',5'-bisphosphate + H(+). In terms of biological role, transfers the 4'-phosphopantetheine moiety from coenzyme A to a Ser of acyl-carrier-protein. The polypeptide is Holo-[acyl-carrier-protein] synthase (Chlorobium luteolum (strain DSM 273 / BCRC 81028 / 2530) (Pelodictyon luteolum)).